A 954-amino-acid polypeptide reads, in one-letter code: Isoleucine--tRNA ligase (954 aa).

The 'HIGH' region motif lies at 58–68; that stretch reads PYANGDIHIGH. Residue glutamate 572 participates in L-isoleucyl-5'-AMP binding. The 'KMSKS' region motif lies at 613–617; the sequence is KMSKS. Lysine 616 serves as a coordination point for ATP. Cysteine 917, cysteine 920, cysteine 937, and cysteine 940 together coordinate Zn(2+).

The protein belongs to the class-I aminoacyl-tRNA synthetase family. IleS type 1 subfamily. Monomer. Zn(2+) serves as cofactor.

The protein localises to the cytoplasm. It carries out the reaction tRNA(Ile) + L-isoleucine + ATP = L-isoleucyl-tRNA(Ile) + AMP + diphosphate. Catalyzes the attachment of isoleucine to tRNA(Ile). As IleRS can inadvertently accommodate and process structurally similar amino acids such as valine, to avoid such errors it has two additional distinct tRNA(Ile)-dependent editing activities. One activity is designated as 'pretransfer' editing and involves the hydrolysis of activated Val-AMP. The other activity is designated 'posttransfer' editing and involves deacylation of mischarged Val-tRNA(Ile). This chain is Isoleucine--tRNA ligase, found in Photobacterium profundum (strain SS9).